The sequence spans 571 residues: PR domain zinc finger protein 14 (571 aa).

Ser79 bears the Phosphoserine mark. Residues 129 to 191 (LGHQIIGGDN…PKPSNQEGKS (63 aa)) form a disordered region. Residues 165-176 (RTSQLLPCSPSK) are compositionally biased toward polar residues. The interaction with CBFA2T2 stretch occupies residues 194-384 (RFQFTEEDLH…DIPVSLQVTE (191 aa)). In terms of domain architecture, SET spans 251–367 (EGLCLMQTVF…QNQELLVWYG (117 aa)). The C2H2-type 1; atypical zinc-finger motif lies at 400-424 (YRCERCGKVFTYKYYRDKHLKYTPC). 5 consecutive C2H2-type zinc fingers follow at residues 432-455 (FPCSLCKRSFEKRDRLRIHILHVH), 461-483 (HKCSTCGKCFSQSSSLNKHMRVH), 489-511 (YQCVYCTKRFTASSILRTHIRQH), 517-540 (FKCKYCGKSFASHAAHDSHVRRSH), and 546-568 (CSCSICGKIFSDQETFYSHMKFH).

This sequence belongs to the class V-like SAM-binding methyltransferase superfamily. Interacts with CBFA2T2. Expressed in embryonic stem cells. Tends to be overexpressed in breast cancer (at protein level).

It localises to the nucleus. Transcription factor that has both positive and negative roles on transcription. Required for the maintenance of embryonic stem cell identity and the reacquisition of pluripotency in somatic cells. May play an essential role in germ cell development at 2 levels: the reacquisition of potential pluripotency, including SOX2 up-regulation, and successful epigenetic reprogramming, characterized by EHMT1 repression. Its association with CBFA2T2 is required for the functions in pluripotency and germ cell formation. Directly up-regulates the expression of pluripotency gene POU5F1 through its proximal enhancer. Binds to the DNA consensus sequence 5'-GGTC[TC]CTAA-3'. This chain is PR domain zinc finger protein 14 (PRDM14), found in Homo sapiens (Human).